Consider the following 176-residue polypeptide: MPNSQAKKGLFQFYPHNLIWLGLSVLAIVLDQWTKWIASTHMNYADPVPVLPFLNWTLLHNYGAAFSFLSDAGGWQRYFFTSLAGLVSILFVFWLLRMPKKMVVLPVAIALILGGALGNLIDRITLGYVVDFIHVYYQNHHFPAFNIADSAITLGTILLLIDTFFLEKQRPKNSDA.

Helical transmembrane passes span 10-30 (LFQF…AIVL), 48-68 (VPVL…AFSF), 78-98 (YFFT…LLRM), and 102-122 (MVVL…NLID). Residues Asp131 and Asp149 contribute to the active site. Residues 141 to 161 (HFPAFNIADSAITLGTILLLI) traverse the membrane as a helical segment.

The protein belongs to the peptidase A8 family.

It localises to the cell inner membrane. The enzyme catalyses Release of signal peptides from bacterial membrane prolipoproteins. Hydrolyzes -Xaa-Yaa-Zaa-|-(S,diacylglyceryl)Cys-, in which Xaa is hydrophobic (preferably Leu), and Yaa (Ala or Ser) and Zaa (Gly or Ala) have small, neutral side chains.. It participates in protein modification; lipoprotein biosynthesis (signal peptide cleavage). Its function is as follows. This protein specifically catalyzes the removal of signal peptides from prolipoproteins. This chain is Lipoprotein signal peptidase, found in Acinetobacter baumannii (strain SDF).